Consider the following 655-residue polypeptide: p-hydroxybenzoic acid efflux pump subunit AaeB (655 aa).

The next 11 membrane-spanning stretches (helical) occupy residues 13 to 33, 38 to 58, 69 to 89, 93 to 113, 121 to 141, 152 to 172, 370 to 390, 407 to 427, 431 to 451, 459 to 479, and 482 to 502; these read FAVK…HFQL, WAVL…GGEP, LRII…IAMI, LLMI…SSLV, WGLA…EPLL, EIVI…PRSI, LFWL…IAVV, FIYG…VIIP, QSML…GIEV, MGAL…TFHF, and FLDS…VILL.

This sequence belongs to the aromatic acid exporter ArAE (TC 2.A.85) family.

It is found in the cell inner membrane. Forms an efflux pump with AaeA. Could function as a metabolic relief valve, allowing to eliminate certain compounds when they accumulate to high levels in the cell. The polypeptide is p-hydroxybenzoic acid efflux pump subunit AaeB (Shigella boydii serotype 18 (strain CDC 3083-94 / BS512)).